Consider the following 443-residue polypeptide: Serine--tRNA ligase (443 aa).

250-252 (TSE) is a binding site for L-serine. An ATP-binding site is contributed by 281–283 (RSE). Glutamate 304 provides a ligand contact to L-serine. ATP is bound at residue 368–371 (EISS). Serine 403 lines the L-serine pocket.

This sequence belongs to the class-II aminoacyl-tRNA synthetase family. Type-1 seryl-tRNA synthetase subfamily. As to quaternary structure, homodimer. The tRNA molecule binds across the dimer.

The protein localises to the cytoplasm. The enzyme catalyses tRNA(Ser) + L-serine + ATP = L-seryl-tRNA(Ser) + AMP + diphosphate + H(+). It catalyses the reaction tRNA(Sec) + L-serine + ATP = L-seryl-tRNA(Sec) + AMP + diphosphate + H(+). It participates in aminoacyl-tRNA biosynthesis; selenocysteinyl-tRNA(Sec) biosynthesis; L-seryl-tRNA(Sec) from L-serine and tRNA(Sec): step 1/1. Its function is as follows. Catalyzes the attachment of serine to tRNA(Ser). Is also able to aminoacylate tRNA(Sec) with serine, to form the misacylated tRNA L-seryl-tRNA(Sec), which will be further converted into selenocysteinyl-tRNA(Sec). This is Serine--tRNA ligase from Variovorax paradoxus (strain S110).